Consider the following 227-residue polypeptide: Monoamine regulon transcriptional regulator (227 aa).

Residues 155 to 220 (EDDLPAILTA…ELVSRTWMPA (66 aa)) form the HTH luxR-type domain. Positions 179 to 198 (NKLIARQLDISLSTVKTHLR) form a DNA-binding region, H-T-H motif.

Positive regulatory protein for the induction of arylsulfatase synthesis (maoA), tyramine oxidase (tynA), maoC, maoE/F operon, and atsB/A operon which are all regulated by monoamines, and included under the common term of monoamine regulon. The polypeptide is Monoamine regulon transcriptional regulator (moaR) (Klebsiella aerogenes (Enterobacter aerogenes)).